Here is a 502-residue protein sequence, read N- to C-terminus: Glycerol kinase (502 aa).

ADP is bound at residue Thr-14. 3 residues coordinate ATP: Thr-14, Thr-15, and Ser-16. Residue Thr-14 participates in sn-glycerol 3-phosphate binding. Arg-18 is a binding site for ADP. Residues Arg-84, Glu-85, Tyr-136, and Asp-246 each coordinate sn-glycerol 3-phosphate. 5 residues coordinate glycerol: Arg-84, Glu-85, Tyr-136, Asp-246, and Gln-247. ADP contacts are provided by Thr-268 and Gly-311. Residues Thr-268, Gly-311, Gln-315, and Gly-412 each contribute to the ATP site. ADP-binding residues include Gly-412 and Asn-416.

It belongs to the FGGY kinase family. Homotetramer and homodimer (in equilibrium). Heterodimer with EIIA-Glc. Binds 1 zinc ion per glycerol kinase EIIA-Glc dimer. The zinc ion is important for dimerization.

It catalyses the reaction glycerol + ATP = sn-glycerol 3-phosphate + ADP + H(+). It functions in the pathway polyol metabolism; glycerol degradation via glycerol kinase pathway; sn-glycerol 3-phosphate from glycerol: step 1/1. Activity of this regulatory enzyme is affected by several metabolites. Allosterically and non-competitively inhibited by fructose 1,6-bisphosphate (FBP) and unphosphorylated phosphocarrier protein EIIA-Glc (III-Glc), an integral component of the bacterial phosphotransferase (PTS) system. In terms of biological role, key enzyme in the regulation of glycerol uptake and metabolism. Catalyzes the phosphorylation of glycerol to yield sn-glycerol 3-phosphate. This Escherichia fergusonii (strain ATCC 35469 / DSM 13698 / CCUG 18766 / IAM 14443 / JCM 21226 / LMG 7866 / NBRC 102419 / NCTC 12128 / CDC 0568-73) protein is Glycerol kinase.